The primary structure comprises 162 residues: SsrA-binding protein (162 aa).

The protein belongs to the SmpB family.

It is found in the cytoplasm. Functionally, required for rescue of stalled ribosomes mediated by trans-translation. Binds to transfer-messenger RNA (tmRNA), required for stable association of tmRNA with ribosomes. tmRNA and SmpB together mimic tRNA shape, replacing the anticodon stem-loop with SmpB. tmRNA is encoded by the ssrA gene; the 2 termini fold to resemble tRNA(Ala) and it encodes a 'tag peptide', a short internal open reading frame. During trans-translation Ala-aminoacylated tmRNA acts like a tRNA, entering the A-site of stalled ribosomes, displacing the stalled mRNA. The ribosome then switches to translate the ORF on the tmRNA; the nascent peptide is terminated with the 'tag peptide' encoded by the tmRNA and targeted for degradation. The ribosome is freed to recommence translation, which seems to be the essential function of trans-translation. This chain is SsrA-binding protein, found in Buchnera aphidicola subsp. Acyrthosiphon pisum (strain 5A).